The following is a 440-amino-acid chain: Suppressor of cytokine signaling 4 (440 aa).

Residues 1–10 are compositionally biased toward polar residues; the sequence is MAENNENISK. The disordered stretch occupies residues 1–29; sequence MAENNENISKNVDVRPKTSRSRSADRKDG. Positions 12 to 29 are enriched in basic and acidic residues; the sequence is VDVRPKTSRSRSADRKDG. An SH2 domain is found at 286-381; it reads CYWGVMDKYA…FFEPLLSTPL (96 aa). The SOCS box domain occupies 376–425; that stretch reads LLSTPLIRTFPFSLQHICRTVICNCTTYDGIDALPIPSSMKLYLKEYHYK.

The protein operates within protein modification; protein ubiquitination. In terms of biological role, SOCS family proteins form part of a classical negative feedback system that regulates cytokine signal transduction. Substrate-recognition component of a SCF-like ECS (Elongin BC-CUL2/5-SOCS-box protein) E3 ubiquitin-protein ligase complex which mediates the ubiquitination and subsequent proteasomal degradation of target proteins. Inhibits EGF signaling by mediating the degradation of the Tyr-phosphorylated EGF receptor/EGFR. This chain is Suppressor of cytokine signaling 4 (SOCS4), found in Homo sapiens (Human).